We begin with the raw amino-acid sequence, 223 residues long: Thiamine-phosphate synthase (223 aa).

4-amino-2-methyl-5-(diphosphooxymethyl)pyrimidine is bound by residues 45 to 49 (QYREK) and N77. The Mg(2+) site is built by D78 and D97. T116 provides a ligand contact to 4-amino-2-methyl-5-(diphosphooxymethyl)pyrimidine. 142-144 (SYT) lines the 2-[(2R,5Z)-2-carboxy-4-methylthiazol-5(2H)-ylidene]ethyl phosphate pocket. Position 145 (K145) interacts with 4-amino-2-methyl-5-(diphosphooxymethyl)pyrimidine. 2-[(2R,5Z)-2-carboxy-4-methylthiazol-5(2H)-ylidene]ethyl phosphate-binding positions include G173 and 193-194 (VT).

The protein belongs to the thiamine-phosphate synthase family. Mg(2+) is required as a cofactor.

It catalyses the reaction 2-[(2R,5Z)-2-carboxy-4-methylthiazol-5(2H)-ylidene]ethyl phosphate + 4-amino-2-methyl-5-(diphosphooxymethyl)pyrimidine + 2 H(+) = thiamine phosphate + CO2 + diphosphate. It carries out the reaction 2-(2-carboxy-4-methylthiazol-5-yl)ethyl phosphate + 4-amino-2-methyl-5-(diphosphooxymethyl)pyrimidine + 2 H(+) = thiamine phosphate + CO2 + diphosphate. The catalysed reaction is 4-methyl-5-(2-phosphooxyethyl)-thiazole + 4-amino-2-methyl-5-(diphosphooxymethyl)pyrimidine + H(+) = thiamine phosphate + diphosphate. It participates in cofactor biosynthesis; thiamine diphosphate biosynthesis; thiamine phosphate from 4-amino-2-methyl-5-diphosphomethylpyrimidine and 4-methyl-5-(2-phosphoethyl)-thiazole: step 1/1. Functionally, condenses 4-methyl-5-(beta-hydroxyethyl)thiazole monophosphate (THZ-P) and 2-methyl-4-amino-5-hydroxymethyl pyrimidine pyrophosphate (HMP-PP) to form thiamine monophosphate (TMP). The protein is Thiamine-phosphate synthase of Dictyoglomus turgidum (strain DSM 6724 / Z-1310).